Reading from the N-terminus, the 294-residue chain is N-acetylmuramic acid 6-phosphate etherase (294 aa).

An SIS domain is found at 54–217 (TIHSFKSNGR…STASMIGVGK (164 aa)). Catalysis depends on Glu82, which acts as the Proton donor. Residue Glu113 is part of the active site.

The protein belongs to the GCKR-like family. MurNAc-6-P etherase subfamily. Homodimer.

The enzyme catalyses N-acetyl-D-muramate 6-phosphate + H2O = N-acetyl-D-glucosamine 6-phosphate + (R)-lactate. It participates in amino-sugar metabolism; N-acetylmuramate degradation. Functionally, specifically catalyzes the cleavage of the D-lactyl ether substituent of MurNAc 6-phosphate, producing GlcNAc 6-phosphate and D-lactate. The protein is N-acetylmuramic acid 6-phosphate etherase of Oceanobacillus iheyensis (strain DSM 14371 / CIP 107618 / JCM 11309 / KCTC 3954 / HTE831).